The following is a 444-amino-acid chain: MRNIIYFILSLLFSFASYALETINIEHGRADPTPIAVNKFNADNSAADVLGHDMVKVISNDLKLSGLFRPISAASFIEEKTGIEYKPLFAAWRQINASLLVNGEVKKLESGKFKISFILWDTLLEKQLAGEILEVPENLWRRAAHKIADKIYEKITGDAGYFDTKIVYVSESNSLPKIKRIALMDYDGANNKYLTNGKSLVLTPRFARSADKIFYVSYATKRRALVYEKDLKTGKESVVGDFPGISFAPRFSPDGRKAVMSIAQNGSTHIYEIDLATKRLHKLTDGFGINTSPSYSPDGKKIVYNSDRNGVPQLYIMNSDGSDVQRISFGGGSYAAPSWSPRGDYIAFTKITRGDGGKTFNIGIMKACPQDDENSERIITSGYLVESPCWSPNGRVIMFTKGWPSRAKAPGKNKIFAIDLTGHNEREIMTPADASDPEWSGVLN.

An N-terminal signal peptide occupies residues 1-19 (MRNIIYFILSLLFSFASYA).

It belongs to the TolB family. The Tol-Pal system is composed of five core proteins: the inner membrane proteins TolA, TolQ and TolR, the periplasmic protein TolB and the outer membrane protein Pal. They form a network linking the inner and outer membranes and the peptidoglycan layer.

It localises to the periplasm. In terms of biological role, part of the Tol-Pal system, which plays a role in outer membrane invagination during cell division and is important for maintaining outer membrane integrity. The chain is Tol-Pal system protein TolB from Rickettsia massiliae (strain Mtu5).